The chain runs to 146 residues: Flagellar assembly factor FliW (146 aa).

Belongs to the FliW family. As to quaternary structure, interacts with translational regulator CsrA and flagellin(s).

It localises to the cytoplasm. Its function is as follows. Acts as an anti-CsrA protein, binds CsrA and prevents it from repressing translation of its target genes, one of which is flagellin. Binds to flagellin and participates in the assembly of the flagellum. This is Flagellar assembly factor FliW from Shouchella clausii (strain KSM-K16) (Alkalihalobacillus clausii).